The primary structure comprises 374 residues: Autophagy-related protein 18e (374 aa).

WD repeat units follow at residues 28–66 (KSDL…KKSI), 72–117 (ESGF…CLSE), 202–242 (AHDS…LLQE), and 247–286 (VERA…LSFD).

This sequence belongs to the WD repeat PROPPIN family. In terms of assembly, component of the PI(3,5)P2 regulatory complex at least composed of ATG18, SAC/FIG4, FAB1 and VAC14.

Its subcellular location is the preautophagosomal structure membrane. The protein localises to the vacuole membrane. Functionally, the PI(3,5)P2 regulatory complex regulates both the synthesis and turnover of phosphatidylinositol 3,5-bisphosphate (PtdIns(3,5)P2). Required for autophagy. This is Autophagy-related protein 18e (ATG18E) from Arabidopsis thaliana (Mouse-ear cress).